A 369-amino-acid chain; its full sequence is Porphobilinogen deaminase, chloroplastic (369 aa).

A chloroplast-targeting transit peptide spans 1–46 (MEMTLYSSSSFSLPSAPSNPSLSLFTSSFRFSSFKTSPFSKCRIRA). C303 carries the S-(dipyrrolylmethanemethyl)cysteine modification.

Belongs to the HMBS family. The cofactor is dipyrromethane.

The protein resides in the plastid. The protein localises to the chloroplast. The catalysed reaction is 4 porphobilinogen + H2O = hydroxymethylbilane + 4 NH4(+). It participates in porphyrin-containing compound metabolism; protoporphyrin-IX biosynthesis; coproporphyrinogen-III from 5-aminolevulinate: step 2/4. The protein operates within porphyrin-containing compound metabolism; chlorophyll biosynthesis. Functionally, tetrapolymerization of the monopyrrole PBG into the hydroxymethylbilane pre-uroporphyrinogen in several discrete steps. The polypeptide is Porphobilinogen deaminase, chloroplastic (HEMC) (Pisum sativum (Garden pea)).